The chain runs to 217 residues: Protein LURP-one-related 2 (217 aa).

This sequence belongs to the LOR family.

Its function is as follows. Might be related to the phospholipid scramblase and tubby-like superfamily of membrane tethered transcription factors. The chain is Protein LURP-one-related 2 from Arabidopsis thaliana (Mouse-ear cress).